A 311-amino-acid chain; its full sequence is Deacetoxycephalosporin C synthase (311 aa).

Residues 154-267 form the Fe2OG dioxygenase domain; it reads DCEPLLRFRY…RTSSVFFLRP (114 aa).

This sequence belongs to the iron/ascorbate-dependent oxidoreductase family. Requires Fe cation as cofactor. The cofactor is L-ascorbate.

The enzyme catalyses penicillin N + 2-oxoglutarate + O2 = deacetoxycephalosporin C + succinate + CO2 + H2O. Its pathway is antibiotic biosynthesis; cephalosporin C biosynthesis. Catalyzes the step from penicillin N to deacetoxy-cephalosporin C. This Streptomyces clavuligerus protein is Deacetoxycephalosporin C synthase (cefE).